The chain runs to 200 residues: Holliday junction branch migration complex subunit RuvA (200 aa).

The segment at 1–63 (MYAYVKGKLT…EDAQLLYGFS (63 aa)) is domain I. The tract at residues 64 to 142 (SEEEKDMFLS…ITEEDSDSLL (79 aa)) is domain II. A flexible linker region spans residues 143 to 149 (QVDATST). The interval 150 to 200 (EQDQFVQEAMLALEALGYSKRELAKVEKTLNKNKYDSVDEAVKAGLQLVVS) is domain III.

It belongs to the RuvA family. Homotetramer. Forms an RuvA(8)-RuvB(12)-Holliday junction (HJ) complex. HJ DNA is sandwiched between 2 RuvA tetramers; dsDNA enters through RuvA and exits via RuvB. An RuvB hexamer assembles on each DNA strand where it exits the tetramer. Each RuvB hexamer is contacted by two RuvA subunits (via domain III) on 2 adjacent RuvB subunits; this complex drives branch migration. In the full resolvosome a probable DNA-RuvA(4)-RuvB(12)-RuvC(2) complex forms which resolves the HJ.

It localises to the cytoplasm. Its function is as follows. The RuvA-RuvB-RuvC complex processes Holliday junction (HJ) DNA during genetic recombination and DNA repair, while the RuvA-RuvB complex plays an important role in the rescue of blocked DNA replication forks via replication fork reversal (RFR). RuvA specifically binds to HJ cruciform DNA, conferring on it an open structure. The RuvB hexamer acts as an ATP-dependent pump, pulling dsDNA into and through the RuvAB complex. HJ branch migration allows RuvC to scan DNA until it finds its consensus sequence, where it cleaves and resolves the cruciform DNA. The polypeptide is Holliday junction branch migration complex subunit RuvA (Staphylococcus aureus (strain MRSA252)).